The chain runs to 420 residues: Shaggy-related protein kinase delta (420 aa).

The interval Met1–Pro61 is disordered. Residues Gly10–Asp26 show a composition bias toward polar residues. Over residues Leu28–Thr41 the composition is skewed to basic and acidic residues. The segment covering Glu42–Ile53 has biased composition (acidic residues). In terms of domain architecture, Protein kinase spans Tyr82–Phe366. Residues Val88–Val96 and Lys111 each bind ATP. Catalysis depends on Asp207, which acts as the Proton acceptor. At Tyr242 the chain carries Phosphotyrosine.

It belongs to the protein kinase superfamily. CMGC Ser/Thr protein kinase family. GSK-3 subfamily. Post-translationally, autophosphorylated mainly on threonine and serine residues.

The catalysed reaction is L-seryl-[protein] + ATP = O-phospho-L-seryl-[protein] + ADP + H(+). It catalyses the reaction L-threonyl-[protein] + ATP = O-phospho-L-threonyl-[protein] + ADP + H(+). May mediate extracellular signals to regulate transcription in differentiating cells. The chain is Shaggy-related protein kinase delta (ASK4) from Arabidopsis thaliana (Mouse-ear cress).